A 72-amino-acid polypeptide reads, in one-letter code: Hypotensin (72 aa).

Residues 1–24 (MKMMIAVFVSILLLMFSLSSTAMG) form the signal peptide. 2 propeptides span residues 25-35 (METEQQNMEER) and 61-72 (RFDPATFGENED).

This sequence belongs to the non-disulfide-bridged peptide (NDBP) superfamily. As to expression, expressed by the venom gland.

The protein resides in the secreted. Its function is as follows. Potentiates the hypotensive action of bradykinin (BK) in normotensive rats, and induces a vasorelaxant effect in mesenteric artery rings that is induced by endothelium-dependent release of nitric oxide (NO). Does not inhibit angiotensin converting enzyme (ACE). Shows neither hemolytic activity nor cytotoxicity to normal and cancer cells. Shows moderate antimicrobial activity against the fungi Candida albicans and the filamentous fungus Trichophyton rubrum, as well as against the bacteria C.albicans (MIC=128 ug/mL), C.tropicalis (MIC=128 ug/mL) and Aspergillus flavus (MIC=128 ug/mL). Has no antimicrobial activity against S.aureus, S.epidermidis and P.aeruginosa. This Tityus stigmurus (Brazilian scorpion) protein is Hypotensin.